A 73-amino-acid chain; its full sequence is Translation initiation factor IF-1 (73 aa).

The region spanning 1–73 (MAKKEDTLVL…TKARVVYRHR (73 aa)) is the S1-like domain.

It belongs to the IF-1 family. As to quaternary structure, component of the 30S ribosomal translation pre-initiation complex which assembles on the 30S ribosome in the order IF-2 and IF-3, IF-1 and N-formylmethionyl-tRNA(fMet); mRNA recruitment can occur at any time during PIC assembly.

Its subcellular location is the cytoplasm. Its function is as follows. One of the essential components for the initiation of protein synthesis. Stabilizes the binding of IF-2 and IF-3 on the 30S subunit to which N-formylmethionyl-tRNA(fMet) subsequently binds. Helps modulate mRNA selection, yielding the 30S pre-initiation complex (PIC). Upon addition of the 50S ribosomal subunit IF-1, IF-2 and IF-3 are released leaving the mature 70S translation initiation complex. This chain is Translation initiation factor IF-1, found in Chlamydia pneumoniae (Chlamydophila pneumoniae).